We begin with the raw amino-acid sequence, 677 residues long: MAKCRVRVSTGEACGAGTWDKVSVSIVGTHGESPLVPLDHLGKEFSAGAEEDFEVTLPQDVGTVLMLRVHKAPPEVSLPLMSFRSDAWFCRWFELEWLPGAALHFPCYQWLEGAGELVLREGAAKVSWQDHHPTLQDQRQKELESRQKMYSWKTYIEGWPRCLDHETVKDLDLNIKYSAMKNAKLFFKAHSAYTELKVKGLLDRTGLWRSLREMRRLFNFRKTPAAEYVFAHWQEDAFFASQFLNGINPVLIRRCHSLPNNFPVTDEMVAPVLGPGTSLQAELEKGSLFLVDHGILSGVHTNILNGKPQFSAAPMTLLHQSSGSGPLLPIAIQLKQTPGPDNPIFLPSDDTWDWLLAKTWVRNSEFYIHEAVTHLLHAHLIPEVFALATLRQLPRCHPLFKLLIPHIRYTLHINTLARELLVAPGKLIDKSTGLGTGGFSDLIKRNMEQLNYSVLCLPEDIRARGVEDIPGYYYRDDGMQIWGAIKSFVSEIVSIYYPSDTSVQDDQELQAWVREIFSEGFLGRESSGMPSLLDTREALVQYITMVIFTCSAKHAAVSSGQFDSCVWMPNLPPTMQLPPPTSKGQARPESFIATLPAVNSSSYHIIALWLLSAEPGDQRPLGHYPDEHFTEDAPRRSVAAFQRKLIQISKGIRERNRGLALPYTYLDPPLIENSVSI.

Residues 2–125 form the PLAT domain; it reads AKCRVRVSTG…ELVLREGAAK (124 aa). Ca(2+) is bound by residues G15, G17, D39, H40, G42, E44, D86, and A87. The region spanning 126-677 is the Lipoxygenase domain; the sequence is VSWQDHHPTL…PPLIENSVSI (552 aa). The Fe cation site is built by H374, H379, H554, and I677.

It belongs to the lipoxygenase family. Requires Fe cation as cofactor. Expressed in epidermis and brain. No expression found in heart, spleen, liver, skeletal muscle, kidney or testis.

The protein localises to the cytoplasm. Its subcellular location is the cytosol. It localises to the membrane. The catalysed reaction is (9Z,12Z)-octadecadienoate + O2 = (9S)-hydroperoxy-(10E,12Z)-octadecadienoate. The enzyme catalyses (5Z,8Z,11Z,14Z)-eicosatetraenoate + O2 = (8S)-hydroperoxy-(5Z,9E,11Z,14Z)-eicosatetraenoate. It catalyses the reaction (15S)-hydroperoxy-(5Z,8Z,11Z,13E)-eicosatetraenoate + O2 = (8S,15S)-dihydroperoxy-(5Z,9E,11Z,13E)-eicosatetraenoate. It carries out the reaction (8S)-hydroperoxy-(5Z,9E,11Z,14Z)-eicosatetraenoate + O2 = (8S,15S)-dihydroperoxy-(5Z,9E,11Z,13E)-eicosatetraenoate. The catalysed reaction is 1-octadecanoyl-2-(5Z,8Z,11Z,14Z-eicosatetraenoyl)-sn-glycero-3-phosphocholine + O2 = 1-octadecanoyl-2-(15-hydroperoxy-5Z,8Z,11Z,13E-eicosatetraenoyl)-sn-glycero-3-phosphocholine. The enzyme catalyses a 1-acyl-2-(5Z,8Z,11Z,14Z-eicosatetraenoyl)-sn-glycero-3-phospho-(1D-myo-inositol) + O2 = a 1-acyl-2-(15-hydroperoxy-5Z,8Z,11Z,13E-eicosatetraenoyl)-sn-glycero-3-phospho-(1D-myo-inositol). It catalyses the reaction a 1-acyl-2-(8Z,11Z,14Z-eicosatrienoyl)-sn-glycero-3-phospho-(1D-myo-inositol) + O2 = a 1-acyl-2-(15-hydroperoxy-8Z,11Z,13E-eicosatrienoyl)-sn-glycero-3-phospho-(1D-myo-inositol). It carries out the reaction (5Z,8Z,11Z,14Z)-eicosatetraenoate + O2 = 9-hydroperoxy-(5Z,7E,11Z,14Z)-eicosatetraenoate. The catalysed reaction is (5Z,8Z,11Z,14Z)-eicosatetraenoate + O2 = 11-hydroperoxy-(5Z,8Z,12E,14Z)-eicosatetraenoate. The enzyme catalyses (8Z,11Z,14Z)-eicosatrienoate + O2 = 15-hydroperoxy-(8Z,11Z,13E)-eicosatrienoate. Its pathway is lipid metabolism; hydroperoxy eicosatetraenoic acid biosynthesis. In terms of biological role, non-heme iron-containing dioxygenase that catalyzes the stereo-specific peroxidation of free and esterified polyunsaturated fatty acids generating a spectrum of bioactive lipid mediators. Catalyzes the peroxidation of arachidonate and linoleate into (8S)-HPETE and (9S)-HPODE respectively. In addition to generate (8S)-HPETE from free arachidonic acid (AA), may produce other HETE isomers from phospholipid-esterified polyunsaturated fatty acids and minor products derived from (8S)-HPETE itself that may include leukotriene A4 and 8,15-diHPETE. With free arachidonate as substrate, has no detectable 15S-lipoxygenase activity and only displays a 8S-lipoxygenase activity. However may have a 15S-lipoxygenase activity with (8S)-HPETE to produce (8S,15S)-diHPETE and when oxidizes directly arachidonic acid esterified to membrane-bound phospholipids to produce a phospholipid-esterified 15-HpETE. May also catalyze (15S)-HPETE peroxidation to produce 8,15-diHPETE. May play a role in keratinocyte differentiation through activation of the peroxisome proliferator activated receptor signaling pathway. The polypeptide is Polyunsaturated fatty acid lipoxygenase ALOX8 (Mus musculus (Mouse)).